The following is an 855-amino-acid chain: DNA mismatch repair protein MutS (855 aa).

615 to 622 (GPNMGGKS) provides a ligand contact to ATP.

Belongs to the DNA mismatch repair MutS family.

This protein is involved in the repair of mismatches in DNA. It is possible that it carries out the mismatch recognition step. This protein has a weak ATPase activity. This chain is DNA mismatch repair protein MutS, found in Aliivibrio salmonicida (strain LFI1238) (Vibrio salmonicida (strain LFI1238)).